The chain runs to 69 residues: Alpha-conotoxin-like Tx1 (69 aa).

An N-terminal signal peptide occupies residues M1–S21. The propeptide occupies S22 to P49. Cystine bridges form between C51–C57 and C52–C65. Residues S53–P55 form a ser-Xaa-Pro motif, crucial for potent interaction with nAChR region. Position 66 is a glycine amide (G66).

It belongs to the conotoxin A superfamily. Expressed by the venom duct.

It localises to the secreted. Functionally, alpha-conotoxins act on postsynaptic membranes, they bind to the nicotinic acetylcholine receptors (nAChR) and thus inhibit them. The protein is Alpha-conotoxin-like Tx1 of Conus textile (Cloth-of-gold cone).